A 119-amino-acid chain; its full sequence is Large ribosomal subunit protein uL22 (119 aa).

Belongs to the universal ribosomal protein uL22 family. In terms of assembly, part of the 50S ribosomal subunit.

Its function is as follows. This protein binds specifically to 23S rRNA; its binding is stimulated by other ribosomal proteins, e.g. L4, L17, and L20. It is important during the early stages of 50S assembly. It makes multiple contacts with different domains of the 23S rRNA in the assembled 50S subunit and ribosome. The globular domain of the protein is located near the polypeptide exit tunnel on the outside of the subunit, while an extended beta-hairpin is found that lines the wall of the exit tunnel in the center of the 70S ribosome. The polypeptide is Large ribosomal subunit protein uL22 (Trichormus variabilis (strain ATCC 29413 / PCC 7937) (Anabaena variabilis)).